A 450-amino-acid chain; its full sequence is 23S rRNA (uracil(1939)-C(5))-methyltransferase RlmD (450 aa).

The region spanning Lys15–Arg73 is the TRAM domain. [4Fe-4S] cluster contacts are provided by Cys86, Cys92, Cys95, and Cys173. S-adenosyl-L-methionine contacts are provided by Gln276, Phe305, Asn310, Glu326, Asn353, and Asp374. Cys400 functions as the Nucleophile in the catalytic mechanism.

It belongs to the class I-like SAM-binding methyltransferase superfamily. RNA M5U methyltransferase family. RlmD subfamily.

It catalyses the reaction uridine(1939) in 23S rRNA + S-adenosyl-L-methionine = 5-methyluridine(1939) in 23S rRNA + S-adenosyl-L-homocysteine + H(+). Catalyzes the formation of 5-methyl-uridine at position 1939 (m5U1939) in 23S rRNA. This is 23S rRNA (uracil(1939)-C(5))-methyltransferase RlmD from Pectobacterium atrosepticum (strain SCRI 1043 / ATCC BAA-672) (Erwinia carotovora subsp. atroseptica).